The primary structure comprises 339 residues: MRLSTPNLQLNEQGKLRHFLTIEGLKQHHLTEILDVAESFINPVTGDISKVPSLHGKTIMNLFFEPSTRTLTTFEIAEKRLSADVVNLNIETSSTKKGETLLDTLWNLEAMLADVFVVRHSESGAAHFIAKHVAPHVHVVNAGDGQHAHPTQAMLDMFTIRKHKGDIFDLKVAIIGDVQHSRVVRSQIQALSILEAREIRVIGPKTLMPSHPEALGVHVYDHIEEGLDGVDVIINVRLQNERMKSALLPSEKEFFNLYGLTKERLSYAKPDAIVMHPGPVNRGVEIDSEVADGHQSVILEQVTYGIAVRMAVMSIIIDNAKQLNADKQITKKVTEEARS.

Carbamoyl phosphate is bound by residues Arg69 and Thr70. Lys97 is a binding site for L-aspartate. Positions 119, 149, and 152 each coordinate carbamoyl phosphate. L-aspartate is bound by residues Arg182 and Arg237. The carbamoyl phosphate site is built by Gly278 and Pro279.

This sequence belongs to the aspartate/ornithine carbamoyltransferase superfamily. ATCase family. As to quaternary structure, heterododecamer (2C3:3R2) of six catalytic PyrB chains organized as two trimers (C3), and six regulatory PyrI chains organized as three dimers (R2).

It catalyses the reaction carbamoyl phosphate + L-aspartate = N-carbamoyl-L-aspartate + phosphate + H(+). The protein operates within pyrimidine metabolism; UMP biosynthesis via de novo pathway; (S)-dihydroorotate from bicarbonate: step 2/3. Its function is as follows. Catalyzes the condensation of carbamoyl phosphate and aspartate to form carbamoyl aspartate and inorganic phosphate, the committed step in the de novo pyrimidine nucleotide biosynthesis pathway. In Hydrogenovibrio crunogenus (strain DSM 25203 / XCL-2) (Thiomicrospira crunogena), this protein is Aspartate carbamoyltransferase catalytic subunit.